Reading from the N-terminus, the 911-residue chain is DNA replication licensing factor mcm4 (911 aa).

A disordered region spans residues 1–132 (MSSSQQSGRA…RPGVSTPSSL (132 aa)). S37, S38, and S41 each carry phosphoserine. A compositionally biased stretch (low complexity) spans 42–56 (TRLTTPRTTARTPLA). The segment covering 63-84 (ESSSPGPNIPQSSRSHLLSQRN) has biased composition (polar residues). At S92 the chain carries Phosphoserine. One can recognise an MCM domain in the interval 493–702 (IYDILSRSLA…LDRKLANHIV (210 aa)). 545-552 (GDPSTSKS) provides a ligand contact to ATP. An Arginine finger motif is present at residues 677–680 (SRFD).

This sequence belongs to the MCM family. In terms of assembly, component of the mcm2-7 complex. The complex forms a toroidal hexameric ring with the proposed subunit order mcm2-mcm6-mcm4-mcm7-mcm3-mcm5. The heterodimers of mcm4/mcm6 and mcm3/mcm5 interact with mcm2 and mcm7.

It localises to the nucleus. It carries out the reaction ATP + H2O = ADP + phosphate + H(+). Acts as a component of the mcm2-7 complex (mcm complex) which is the putative replicative helicase essential for 'once per cell cycle' DNA replication initiation and elongation in eukaryotic cells. The active ATPase sites in the mcm2-7 ring are formed through the interaction surfaces of two neighboring subunits such that a critical structure of a conserved arginine finger motif is provided in trans relative to the ATP-binding site of the Walker A box of the adjacent subunit. The six ATPase active sites, however, are likely to contribute differentially to the complex helicase activity. Required for S phase execution. This chain is DNA replication licensing factor mcm4 (mcm4), found in Schizosaccharomyces pombe (strain 972 / ATCC 24843) (Fission yeast).